The chain runs to 295 residues: Small ribosomal subunit protein uS2 (295 aa).

At Ser-2 the chain carries N-acetylserine. Residue Ser-43 is modified to Phosphoserine. Lys-52 is subject to N6-acetyllysine. Residues 54-113 (TWEKLLLAARAIVAIENPADVSVISSRNTGQRAVLKFAAATGATPIAGRFTPGTFTNQIQ) form an interaction with PPP1R16B region. Lys-89 is subject to N6-acetyllysine; alternate. A Glycyl lysine isopeptide (Lys-Gly) (interchain with G-Cter in SUMO2); alternate cross-link involves residue Lys-89. Thr-97 is modified (phosphothreonine). Laminin-binding regions lie at residues 161-180 (IPCNNKGAHSVGLMWWMLAR) and 205-229 (RDPEEIEKEEQAAAEKAVTKEEFQG). [DE]-W-[ST] repeat units lie at residues 230-232 (EWT), 247-249 (DWS), 266-268 (DWS), 275-277 (DWS), and 293-295 (EWS). Residues 242-295 (QPEVADWSEGVQVPSVPIQQFPTEDWSAQPATEDWSAAPTAQATEWVGATTEWS) are laminin-binding. The segment at 266–295 (DWSAQPATEDWSAAPTAQATEWVGATTEWS) is disordered.

It belongs to the universal ribosomal protein uS2 family. In terms of assembly, monomer (37LRP) and homodimer (67LR). Component of the small ribosomal subunit. Mature ribosomes consist of a small (40S) and a large (60S) subunit. The 40S subunit contains about 33 different proteins and 1 molecule of RNA (18S). The 60S subunit contains about 49 different proteins and 3 molecules of RNA (28S, 5.8S and 5S). Interacts with RPS21. Interacts with several laminins including at least LAMB1. Interacts with MDK. Interacts with PRNP. The mature dimeric form interacts with PPP1R16B (via its fourth ankyrin repeat). Interacts with PPP1CA only in the presence of PPP1R16B. Acylated. Acylation may be a prerequisite for conversion of the monomeric 37 kDa laminin receptor precursor (37LRP) to the mature dimeric 67 kDa laminin receptor (67LR), and may provide a mechanism for membrane association. In terms of processing, cleaved by stromelysin-3 (ST3) at the cell surface. Cleavage by stromelysin-3 may be a mechanism to alter cell-extracellular matrix interactions.

The protein localises to the cell membrane. It localises to the cytoplasm. Its subcellular location is the nucleus. In terms of biological role, required for the assembly and/or stability of the 40S ribosomal subunit. Required for the processing of the 20S rRNA-precursor to mature 18S rRNA in a late step of the maturation of 40S ribosomal subunits. Also functions as a cell surface receptor for laminin. Plays a role in cell adhesion to the basement membrane and in the consequent activation of signaling transduction pathways. May play a role in cell fate determination and tissue morphogenesis. Also acts as a receptor for several other ligands, including the pathogenic prion protein, viruses, and bacteria. Acts as a PPP1R16B-dependent substrate of PPP1CA. Enables malignant tumor cells to penetrate laminin tissue and vessel barriers. Activates precursor thymic anti-OFA/iLRP specific cytotoxic T-cell. May induce CD8 T-suppressor cells secreting IL-10. In Mus musculus (Mouse), this protein is Small ribosomal subunit protein uS2 (Rpsa).